We begin with the raw amino-acid sequence, 375 residues long: MPDVLDASPYDALLLLSFGGPEGPDDVVPFLENVTRGRGIPKERLKEVGQHYFLFGGVSPINDQNRALLDALRKDFAEHGLDLPVYWGNRNWAPYLTDTLREMVGDGRRRILVLATSAYASYSGCRQYRENLADALAALESEGLELPKIDKLRHYFNHPGFVEPMVDGVVRSLAELPAEVRDGAHIAFCTHSIPTSAADGSGPVEEHGDGGAYVRQHLDVARLIADAVRERTGVDHPWQLVYQSRSGAPHIPWLEPDICDHLEERQAAGVPAVVMAPIGFVSDHMEVLYDLDTEATAKAEELGLPVRRSATVGADPRFAAAVRDLVLERAGDERGQEVTPCALGTLGASHNLCPVGCCPARAPRPAAAGADSPYA.

2 residues coordinate Fe-coproporphyrin III: S59 and Y128. Fe(2+) contacts are provided by H191 and E286.

It belongs to the ferrochelatase family.

The protein localises to the cytoplasm. The catalysed reaction is Fe-coproporphyrin III + 2 H(+) = coproporphyrin III + Fe(2+). It functions in the pathway porphyrin-containing compound metabolism; protoheme biosynthesis. In terms of biological role, involved in coproporphyrin-dependent heme b biosynthesis. Catalyzes the insertion of ferrous iron into coproporphyrin III to form Fe-coproporphyrin III. This chain is Coproporphyrin III ferrochelatase, found in Streptomyces coelicolor (strain ATCC BAA-471 / A3(2) / M145).